Consider the following 207-residue polypeptide: Ribosomal RNA small subunit methyltransferase G (207 aa).

S-adenosyl-L-methionine contacts are provided by residues G76, Q81, 127–128, and R141; that span reads VE.

It belongs to the methyltransferase superfamily. RNA methyltransferase RsmG family.

It is found in the cytoplasm. The catalysed reaction is guanosine(527) in 16S rRNA + S-adenosyl-L-methionine = N(7)-methylguanosine(527) in 16S rRNA + S-adenosyl-L-homocysteine. In terms of biological role, specifically methylates the N7 position of guanine in position 527 of 16S rRNA. This chain is Ribosomal RNA small subunit methyltransferase G, found in Neisseria meningitidis serogroup C (strain 053442).